A 289-amino-acid chain; its full sequence is MMTTSYLAFPQFDPVIFSIGPLALHWYGLMYLVGFVFAMWLAVRRANKPGSGWTKDEVENLLYMGFLGVFVGGRLGYVLFYAFPSFLENPLYLFKVWDGGMSFHGGLMGVICVMLWFAHRTKRHFFQVADFIAPLIPFGLGAGRLGNFINGELWGRVTTDTPWAMLFPGSRSEDMMLAVSNPQWQAIFNQYGMLPRHPSQLYQMMLEGVALFIILNLFIRKSRPMGSVSGLFLIGYGTFRIITEFFRQPDAQLGLFGDLFSMGQILSLPMVIAGILMMVWAYRRQPVQQ.

A run of 7 helical transmembrane segments spans residues 23-43, 61-81, 99-119, 125-145, 199-219, 226-246, and 259-279; these read ALHW…WLAV, LLYM…VLFY, GGMS…WFAH, FFQV…AGRL, SQLY…NLFI, GSVS…TEFF, and LFSM…LMMV. Arginine 144 lines the a 1,2-diacyl-sn-glycero-3-phospho-(1'-sn-glycerol) pocket.

This sequence belongs to the Lgt family.

The protein localises to the cell inner membrane. It carries out the reaction L-cysteinyl-[prolipoprotein] + a 1,2-diacyl-sn-glycero-3-phospho-(1'-sn-glycerol) = an S-1,2-diacyl-sn-glyceryl-L-cysteinyl-[prolipoprotein] + sn-glycerol 1-phosphate + H(+). It functions in the pathway protein modification; lipoprotein biosynthesis (diacylglyceryl transfer). In terms of biological role, catalyzes the transfer of the diacylglyceryl group from phosphatidylglycerol to the sulfhydryl group of the N-terminal cysteine of a prolipoprotein, the first step in the formation of mature lipoproteins. This Pectobacterium carotovorum subsp. carotovorum (strain PC1) protein is Phosphatidylglycerol--prolipoprotein diacylglyceryl transferase.